A 1039-amino-acid chain; its full sequence is Error-prone DNA polymerase (1039 aa).

It belongs to the DNA polymerase type-C family. DnaE2 subfamily.

It is found in the cytoplasm. The enzyme catalyses DNA(n) + a 2'-deoxyribonucleoside 5'-triphosphate = DNA(n+1) + diphosphate. Functionally, DNA polymerase involved in damage-induced mutagenesis and translesion synthesis (TLS). It is not the major replicative DNA polymerase. This is Error-prone DNA polymerase from Corynebacterium diphtheriae (strain ATCC 700971 / NCTC 13129 / Biotype gravis).